Consider the following 195-residue polypeptide: Imidazoleglycerol-phosphate dehydratase (195 aa).

This sequence belongs to the imidazoleglycerol-phosphate dehydratase family.

The protein resides in the cytoplasm. The catalysed reaction is D-erythro-1-(imidazol-4-yl)glycerol 3-phosphate = 3-(imidazol-4-yl)-2-oxopropyl phosphate + H2O. Its pathway is amino-acid biosynthesis; L-histidine biosynthesis; L-histidine from 5-phospho-alpha-D-ribose 1-diphosphate: step 6/9. This chain is Imidazoleglycerol-phosphate dehydratase, found in Cereibacter sphaeroides (strain ATCC 17023 / DSM 158 / JCM 6121 / CCUG 31486 / LMG 2827 / NBRC 12203 / NCIMB 8253 / ATH 2.4.1.) (Rhodobacter sphaeroides).